The sequence spans 161 residues: RNA pyrophosphohydrolase (161 aa).

Positions 9–155 constitute a Nudix hydrolase domain; sequence PYRPCVGVML…KRRVYRQVVD (147 aa). Positions 44-65 match the Nudix box motif; sequence GGIDDGEELHPAALRELSEETG.

Belongs to the Nudix hydrolase family. RppH subfamily. Requires a divalent metal cation as cofactor.

Its function is as follows. Accelerates the degradation of transcripts by removing pyrophosphate from the 5'-end of triphosphorylated RNA, leading to a more labile monophosphorylated state that can stimulate subsequent ribonuclease cleavage. The sequence is that of RNA pyrophosphohydrolase from Novosphingobium aromaticivorans (strain ATCC 700278 / DSM 12444 / CCUG 56034 / CIP 105152 / NBRC 16084 / F199).